The chain runs to 61 residues: Probable tautomerase SSP1389 (61 aa).

P2 (proton acceptor; via imino nitrogen) is an active-site residue.

It belongs to the 4-oxalocrotonate tautomerase family.

The sequence is that of Probable tautomerase SSP1389 from Staphylococcus saprophyticus subsp. saprophyticus (strain ATCC 15305 / DSM 20229 / NCIMB 8711 / NCTC 7292 / S-41).